We begin with the raw amino-acid sequence, 275 residues long: Undecaprenyl-diphosphatase (275 aa).

The next 8 helical transmembrane spans lie at 4–24, 54–74, 92–112, 123–143, 154–174, 194–214, 228–248, and 255–275; these read IYGLVVALILGIVEGLTEFLP, LGSILAVIIICKQRWFLLFGL, LHLYHIILGLIPSSILGLMFY, YVMYSLILGSLLLLISQLIHD, ISYLQAFLIGCFQCFALLPGF, AFEFSFLLAVPMIFGATILDL, MFIIGFITAFLVALITIKLFW, and SFIPFVLYRFLLVIVFYLILI.

The protein belongs to the UppP family.

The protein resides in the cell membrane. It catalyses the reaction di-trans,octa-cis-undecaprenyl diphosphate + H2O = di-trans,octa-cis-undecaprenyl phosphate + phosphate + H(+). In terms of biological role, catalyzes the dephosphorylation of undecaprenyl diphosphate (UPP). Confers resistance to bacitracin. The polypeptide is Undecaprenyl-diphosphatase (Baumannia cicadellinicola subsp. Homalodisca coagulata).